The following is a 644-amino-acid chain: Protein FAM149B1 (644 aa).

Disordered regions lie at residues 392 to 490 (NQSD…NTLL), 551 to 575 (TFRS…RPGR), and 609 to 644 (GHFP…RPGL). The span at 395–404 (DCRDSEDKVS) shows a compositional bias: basic and acidic residues. Polar residues predominate over residues 449–459 (PITSSVTQPIT). Residues 626–644 (QARSHNRGGSTARSSRPGL) show a composition bias toward polar residues.

The protein belongs to the FAM149 family.

This chain is Protein FAM149B1 (fam149b1), found in Danio rerio (Zebrafish).